The sequence spans 583 residues: 2-succinyl-5-enolpyruvyl-6-hydroxy-3-cyclohexene-1-carboxylate synthase (583 aa).

The protein belongs to the TPP enzyme family. MenD subfamily. Homodimer. The cofactor is Mg(2+). Mn(2+) serves as cofactor. Requires thiamine diphosphate as cofactor.

It carries out the reaction isochorismate + 2-oxoglutarate + H(+) = 5-enolpyruvoyl-6-hydroxy-2-succinyl-cyclohex-3-ene-1-carboxylate + CO2. It participates in quinol/quinone metabolism; 1,4-dihydroxy-2-naphthoate biosynthesis; 1,4-dihydroxy-2-naphthoate from chorismate: step 2/7. The protein operates within quinol/quinone metabolism; menaquinone biosynthesis. Functionally, catalyzes the thiamine diphosphate-dependent decarboxylation of 2-oxoglutarate and the subsequent addition of the resulting succinic semialdehyde-thiamine pyrophosphate anion to isochorismate to yield 2-succinyl-5-enolpyruvyl-6-hydroxy-3-cyclohexene-1-carboxylate (SEPHCHC). The sequence is that of 2-succinyl-5-enolpyruvyl-6-hydroxy-3-cyclohexene-1-carboxylate synthase from Chlorobium limicola (strain DSM 245 / NBRC 103803 / 6330).